The primary structure comprises 308 residues: Methionyl-tRNA formyltransferase (308 aa).

109 to 112 (SLLP) provides a ligand contact to (6S)-5,6,7,8-tetrahydrofolate.

It belongs to the Fmt family.

The enzyme catalyses L-methionyl-tRNA(fMet) + (6R)-10-formyltetrahydrofolate = N-formyl-L-methionyl-tRNA(fMet) + (6S)-5,6,7,8-tetrahydrofolate + H(+). In terms of biological role, attaches a formyl group to the free amino group of methionyl-tRNA(fMet). The formyl group appears to play a dual role in the initiator identity of N-formylmethionyl-tRNA by promoting its recognition by IF2 and preventing the misappropriation of this tRNA by the elongation apparatus. The protein is Methionyl-tRNA formyltransferase of Phenylobacterium zucineum (strain HLK1).